The following is a 388-amino-acid chain: Cell adhesion molecule 4 (388 aa).

The signal sequence occupies residues 1-20 (MGRARRFQWPLLLLWAAAAG). One can recognise an Ig-like V-type domain in the interval 21 to 119 (PGAGQEVQTE…DTHHQIATLT (99 aa)). Over 21-324 (PGAGQEVQTE…VEAQTSVPYA (304 aa)) the chain is Extracellular. 2 N-linked (GlcNAc...) asparagine glycosylation sites follow: Asn31 and Asn67. 3 cysteine pairs are disulfide-bonded: Cys44–Cys104, Cys145–Cys199, and Cys245–Cys291. Ig-like C2-type domains follow at residues 124–219 (PENP…YVLD) and 224–307 (PTAR…YVLV). N-linked (GlcNAc...) asparagine glycosylation occurs at Asn286. A helical membrane pass occupies residues 325–345 (IVGGILALLVFLIICVLVGMV). Residues 346 to 388 (WCSVRQKGSYLTHEASGLDEQGEAREAFLNGSDGHKRKEEFFI) are Cytoplasmic-facing. Ser361 carries the phosphoserine modification.

This sequence belongs to the nectin family. As to quaternary structure, monomer and homodimer. N-glycosylated. Expressed in brain, prostate, brain, kidney and some other organs.

It is found in the membrane. Functionally, involved in the cell-cell adhesion. Has calcium- and magnesium-independent cell-cell adhesion activity. May have tumor-suppressor activity. In Homo sapiens (Human), this protein is Cell adhesion molecule 4 (CADM4).